A 663-amino-acid chain; its full sequence is UvrABC system protein B (663 aa).

Residues 1–10 (MIDKRDDKPF) are compositionally biased toward basic and acidic residues. The segment at 1-23 (MIDKRDDKPFKLKSKYKPSGDQP) is disordered. A Helicase ATP-binding domain is found at 31 to 418 (DNIEGGEKAQ…TNTIIEQIIR (388 aa)). 44 to 51 (GATGTGKT) is a binding site for ATP. The Beta-hairpin signature appears at 97 to 120 (YYDYYQPEAYVPSSDTYIEKDSSV). One can recognise a Helicase C-terminal domain in the interval 435–601 (QMDDLLGEIN…TIKKDIRGLI (167 aa)). Residues 627–662 (KEAINALQKQMQEAAELLDFELAAQMRDLILELKLM) enclose the UVR domain.

Belongs to the UvrB family. As to quaternary structure, forms a heterotetramer with UvrA during the search for lesions. Interacts with UvrC in an incision complex.

The protein localises to the cytoplasm. The UvrABC repair system catalyzes the recognition and processing of DNA lesions. A damage recognition complex composed of 2 UvrA and 2 UvrB subunits scans DNA for abnormalities. Upon binding of the UvrA(2)B(2) complex to a putative damaged site, the DNA wraps around one UvrB monomer. DNA wrap is dependent on ATP binding by UvrB and probably causes local melting of the DNA helix, facilitating insertion of UvrB beta-hairpin between the DNA strands. Then UvrB probes one DNA strand for the presence of a lesion. If a lesion is found the UvrA subunits dissociate and the UvrB-DNA preincision complex is formed. This complex is subsequently bound by UvrC and the second UvrB is released. If no lesion is found, the DNA wraps around the other UvrB subunit that will check the other stand for damage. The polypeptide is UvrABC system protein B (Streptococcus pyogenes serotype M28 (strain MGAS6180)).